The primary structure comprises 153 residues: MPLLLSGRVFRRDLDACGCLAMHVPLEGGSETRLLRRLRAAGYRTQLSSARGLGDPEVFLFQLHGIRPPHLGHQSVGRNGAVGEVQQVMPQLAELFVDNVPVVLWLLEGQVLSRSELLALCDLCKRESRLRVVVEMGGARSLNWQPMSTLLGV.

Belongs to the complex I NdhN subunit family. As to quaternary structure, NDH-1 can be composed of about 15 different subunits; different subcomplexes with different compositions have been identified which probably have different functions.

The protein localises to the cellular thylakoid membrane. It catalyses the reaction a plastoquinone + NADH + (n+1) H(+)(in) = a plastoquinol + NAD(+) + n H(+)(out). It carries out the reaction a plastoquinone + NADPH + (n+1) H(+)(in) = a plastoquinol + NADP(+) + n H(+)(out). Its function is as follows. NDH-1 shuttles electrons from an unknown electron donor, via FMN and iron-sulfur (Fe-S) centers, to quinones in the respiratory and/or the photosynthetic chain. The immediate electron acceptor for the enzyme in this species is believed to be plastoquinone. Couples the redox reaction to proton translocation, and thus conserves the redox energy in a proton gradient. Cyanobacterial NDH-1 also plays a role in inorganic carbon-concentration. The protein is NAD(P)H-quinone oxidoreductase subunit N of Prochlorococcus marinus (strain MIT 9303).